A 206-amino-acid polypeptide reads, in one-letter code: Repetitive proline-rich cell wall protein 1 (206 aa).

A signal peptide spans 1-22 (MASSNFLVLLLFALFAIPQGLA). A run of 33 repeats spans residues 32-36 (PPVYK), 37-41 (PPVEK), 42-46 (PPVYK), 47-51 (PPVEK), 52-56 (PPVYK), 57-61 (PPVEK), 62-66 (PPVYK), 67-71 (PPVYK), 72-76 (PPVYK), 77-81 (PPVVK), 82-86 (PPVYK), 87-91 (PPVYK), 92-96 (PPVYK), 97-101 (PPVYK), 102-106 (PPVEK), 107-111 (PPVYK), 112-116 (PPVYK), 117-121 (PPVVK), 122-126 (PPVYK), 127-131 (PPVYK), 132-136 (PPVEK), 137-141 (PPVYK), 142-146 (PPVVK), 147-151 (PPVYK), 152-156 (PPVYK), 157-161 (PPVVK), 162-166 (PPVYK), 167-171 (PPVYK), 172-176 (PPVYK), 177-181 (PPVEK), 182-186 (PPVYK), 187-191 (PPVYK), and 192-196 (PPVEK). The 34 X 5 AA approximate tandem repeats of P-P-V-[EVY]-K stretch occupies residues 32-201 (PPVYKPPVEK…PPVEKPPVYG (170 aa)). The interval 51–84 (KPPVYKPPVEKPPVYKPPVYKPPVYKPPVVKPPV) is disordered. The interval 132–206 (PPVEKPPVYK…PPVYGPPHHP (75 aa)) is disordered. Residues 197–201 (PPVYG) form a 34; approximate repeat.

Belongs to the plant proline-rich protein superfamily. ENOD12 family. Expressed in hypocotyls, roots and mature root nodules.

It localises to the secreted. Its subcellular location is the cell wall. Its function is as follows. This is a developmentally regulated putative cell wall protein. In Medicago truncatula (Barrel medic), this protein is Repetitive proline-rich cell wall protein 1 (PRP1).